The primary structure comprises 226 residues: 2,3-bisphosphoglycerate-dependent phosphoglycerate mutase (226 aa).

Substrate-binding positions include 8–15 (RHGQSVWN), 21–22 (TG), Arg-58, 109–112 (ERMY), Lys-120, 136–137 (RR), and 180–181 (GN). His-9 functions as the Tele-phosphohistidine intermediate in the catalytic mechanism. Glu-109 acts as the Proton donor/acceptor in catalysis.

It belongs to the phosphoglycerate mutase family. BPG-dependent PGAM subfamily.

It catalyses the reaction (2R)-2-phosphoglycerate = (2R)-3-phosphoglycerate. It participates in carbohydrate degradation; glycolysis; pyruvate from D-glyceraldehyde 3-phosphate: step 3/5. In terms of biological role, catalyzes the interconversion of 2-phosphoglycerate and 3-phosphoglycerate. This is 2,3-bisphosphoglycerate-dependent phosphoglycerate mutase from Chlamydia muridarum (strain MoPn / Nigg).